The chain runs to 701 residues: Elongation factor G (701 aa).

Residues 8–290 (SLYRNIGISA…AVVELLPAPT (283 aa)) enclose the tr-type G domain. Residues 17-24 (AHIDAGKT), 88-92 (DTPGH), and 142-145 (NKMD) contribute to the GTP site.

The protein belongs to the TRAFAC class translation factor GTPase superfamily. Classic translation factor GTPase family. EF-G/EF-2 subfamily.

Its subcellular location is the cytoplasm. In terms of biological role, catalyzes the GTP-dependent ribosomal translocation step during translation elongation. During this step, the ribosome changes from the pre-translocational (PRE) to the post-translocational (POST) state as the newly formed A-site-bound peptidyl-tRNA and P-site-bound deacylated tRNA move to the P and E sites, respectively. Catalyzes the coordinated movement of the two tRNA molecules, the mRNA and conformational changes in the ribosome. This Neisseria meningitidis serogroup B (strain ATCC BAA-335 / MC58) protein is Elongation factor G.